Here is a 72-residue protein sequence, read N- to C-terminus: MRLVVCLVFLASFALVCQGEAYRGGYTGPIPRPPPIGRPPLRPVCNACYRLSVSDARNCCIKFGSCCHLVKG.

Positions 1–21 (MRLVVCLVFLASFALVCQGEA) are cleaved as a signal peptide. 3 disulfides stabilise this stretch: Cys-45–Cys-59, Cys-48–Cys-66, and Cys-60–Cys-67. Lysine amide is present on Lys-71.

It belongs to the penaeidin family.

It is found in the cytoplasmic granule. Its function is as follows. Antibacterial and antifungal activity. Presents chitin-binding activity. The chain is Penaeidin-2b from Penaeus vannamei (Whiteleg shrimp).